The chain runs to 157 residues: 3-dehydroquinate dehydratase (157 aa).

Tyrosine 29 acts as the Proton acceptor in catalysis. 3 residues coordinate substrate: asparagine 80, histidine 86, and aspartate 93. Histidine 107 functions as the Proton donor in the catalytic mechanism. Residues 108-109 (IS) and arginine 118 contribute to the substrate site.

This sequence belongs to the type-II 3-dehydroquinase family. As to quaternary structure, homododecamer.

It carries out the reaction 3-dehydroquinate = 3-dehydroshikimate + H2O. Its pathway is metabolic intermediate biosynthesis; chorismate biosynthesis; chorismate from D-erythrose 4-phosphate and phosphoenolpyruvate: step 3/7. Catalyzes a trans-dehydration via an enolate intermediate. The polypeptide is 3-dehydroquinate dehydratase (aroQ) (Streptomyces coelicolor (strain ATCC BAA-471 / A3(2) / M145)).